A 234-amino-acid chain; its full sequence is Purine nucleoside phosphorylase DeoD-type (234 aa).

H5 provides a ligand contact to a purine D-ribonucleoside. Phosphate contacts are provided by residues G21, R25, R44, and R88 to T91. Residues E178–E180 and S202–D203 contribute to the a purine D-ribonucleoside site. The Proton donor role is filled by D203.

The protein belongs to the PNP/UDP phosphorylase family. As to quaternary structure, homohexamer; trimer of homodimers.

It catalyses the reaction a purine D-ribonucleoside + phosphate = a purine nucleobase + alpha-D-ribose 1-phosphate. It carries out the reaction a purine 2'-deoxy-D-ribonucleoside + phosphate = a purine nucleobase + 2-deoxy-alpha-D-ribose 1-phosphate. Its function is as follows. Catalyzes the reversible phosphorolytic breakdown of the N-glycosidic bond in the beta-(deoxy)ribonucleoside molecules, with the formation of the corresponding free purine bases and pentose-1-phosphate. The chain is Purine nucleoside phosphorylase DeoD-type from Lactococcus lactis subsp. lactis (strain IL1403) (Streptococcus lactis).